Reading from the N-terminus, the 215-residue chain is Small ribosomal subunit protein uS7 (215 aa).

Belongs to the universal ribosomal protein uS7 family. Part of the 30S ribosomal subunit.

Functionally, one of the primary rRNA binding proteins, it binds directly to 16S rRNA where it nucleates assembly of the head domain of the 30S subunit. Is located at the subunit interface close to the decoding center. The polypeptide is Small ribosomal subunit protein uS7 (Thermococcus kodakarensis (strain ATCC BAA-918 / JCM 12380 / KOD1) (Pyrococcus kodakaraensis (strain KOD1))).